The following is a 351-amino-acid chain: MKKTAIAITVALAGFATVAQAAPKDNTWYTGAKLGWSQYHDTGFIDNNGPTHENQLGAGAFGGYQVNPYVGFEMGYDWLGRMPYKGSVENGAYKAQGVQLTAKLGYPITDDLDVYTRLGGMVWRADTKAHNNVTGESEKNHDTGVSPVFAGGVEWAITPEIATRLEYQWTNNIGDAHTIGTRPDNGLLSLGVSYRFGQGEAAPVVAPAPAPAPEVQTKHFTLKSDVLFNFNKATLKPEGQAALDQLYSQLSNLDPKDGSVVVLGYTDRIGSDAYNQGLSERRAQSVVDYLISKGIPADKISARGMGESNPVTGNTCDNVKQRAALIDCLAPDRRVEIEVKGIKDVVTQPQA.

An N-terminal signal peptide occupies residues 1-21 (MKKTAIAITVALAGFATVAQA). The next 8 beta stranded transmembrane spans lie at 27–37 (TWYTGAKLGWS), 55–66 (QLGAGAFGGYQV), 70–78 (VGFEMGYDW), 96–107 (QGVQLTAKLGYP), 112–120 (LDVYTRLGG), 147–156 (PVFAGGVEWA), 161–168 (IATRLEYQ), and 187–195 (LLSLGVSYR). Repeat copies occupy residues 206–207 (AP), 208–209 (AP), 210–211 (AP), and 212–213 (AP). Residues 206–213 (APAPAPAP) are 4 X 2 AA tandem repeats of A-P. Residues 215 to 343 (VQTKHFTLKS…RVEIEVKGIK (129 aa)) enclose the OmpA-like domain. The cysteines at positions 316 and 328 are disulfide-linked.

Belongs to the outer membrane OOP (TC 1.B.6) superfamily. OmpA family. In terms of assembly, monomer and homodimer.

The protein localises to the cell outer membrane. Functionally, with TolR probably plays a role in maintaining the position of the peptidoglycan cell wall in the periplasm. Acts as a porin with low permeability that allows slow penetration of small solutes; an internal gate slows down solute passage. In terms of biological role, required for conjugation with F-type plasmids; probably serves as the mating receptor on recipient cells. The chain is Outer membrane protein A from Shigella dysenteriae.